Reading from the N-terminus, the 207-residue chain is MRTLDKRIAPNVKLAASLVARAPTLTLAYDARCKSRLAATLDTGEDVAVLLPRGTILRDGDVLVADDGALVRIAAAPETVLRVRAADPLTLMRAAYHLGNRHTPVEIGDGYLKLEADPVLADMLRRLGTQVEETLAPFQPEAGAYGGGHKHGHDATFAEDYALAQQVFGEHHGHAHSHSHSHDHDHDHDHDHQHGPGCAHGHGHDHH.

Residues 171-207 form a disordered region; it reads HHGHAHSHSHSHDHDHDHDHDHQHGPGCAHGHGHDHH. Positions 180 to 194 are enriched in basic and acidic residues; sequence HSHDHDHDHDHDHQH.

It belongs to the UreE family.

The protein resides in the cytoplasm. Functionally, involved in urease metallocenter assembly. Binds nickel. Probably functions as a nickel donor during metallocenter assembly. This Burkholderia lata (strain ATCC 17760 / DSM 23089 / LMG 22485 / NCIMB 9086 / R18194 / 383) protein is Urease accessory protein UreE.